A 185-amino-acid chain; its full sequence is Ribosome-recycling factor (185 aa).

The protein belongs to the RRF family.

The protein resides in the cytoplasm. Responsible for the release of ribosomes from messenger RNA at the termination of protein biosynthesis. May increase the efficiency of translation by recycling ribosomes from one round of translation to another. The chain is Ribosome-recycling factor from Bacillus anthracis (strain CDC 684 / NRRL 3495).